A 967-amino-acid polypeptide reads, in one-letter code: MSHESSEKAHKAIENVEDYCQTLTRHGNEELRTNLERVITTFKSNLMHSLLDIHDLYEQTLLSERKSDAEKNMEVRRVIERLEGGPHSYNSRPAATTSTSNYNLSSTTPLISDLRDRGGFSYLNGGGLGNGLGNGLGNGLLSSPYNSSSTHYLHERQRQTSHDGTWRETTTRTVDTPSGLERRVVEHTGVIDDHGRKWELENIVLEKGHTGLGFSITGGMDQPTEDGDTSIYVTNIIEGGAALADGRMRKNDIITAVNNTNCENVKHEVAVNALKSSGNVVSLSLKRRKDEAFLPIGGNFGGSTSYLRSGVTPSVSAGNLQHAIHSPSAPIHPPPPPPVHHGSLSQLSVGQYRSTRPNTSVIDLVKGARGLGFSIAGGQGNEHVKGDTDIYVTKIIEEGAAELDGRLRVGDKILEVDHHSLINTTHENAVNVLKNTGNRVRLLIQQGTGAIFNDSASQQFMPTTPILRPSSVQDYNRSQMGSQSHLSYGGPLNTSYSSQAPIAIPLEPRPVQLVKGQNGLGFNIVGGEDNEPIYISFVLPGGVADLSGNVKTGDVLLEVNGVVLRNATHKEAAEALRNAGNPVYLTLQYRPQEYQIFESKIEKLRNDVIAQSRMGTLSRKSEYVRALFDYDPSRENSVAPHRSMGFNYGDILHIINSSDDEWWTARKVHENGEETAEGVIPSKKRVEKRERLRRKQVNFNSGSQSLGRNSSTTGLENRRGSRSQLSFSRKFPFVKSTDRLNDLNEESSNVAEEPVWSYQAVEQQAINYVRPVIILGALKDRINDELVNRDPSKFSSCVPHTSRPPREGEVNGRDYYFVNKHNMEEDVKNNLFIEAGQFQNNLYGTSIQSVRDVANQGRHCILDVSGNAIRRLQSNANIQPISIFIKPSSAQQILELDSQLATNRQDDRAMSGEEAQAQYSRCHRIEQTFGDLFTQEISNVHSANDVLSKVYSIISRESQTPIWVPRH.

The 61-residue stretch at 5 to 65 folds into the L27 domain; that stretch reads SSEKAHKAIE…LYEQTLLSER (61 aa). Positions 202–289 constitute a PDZ 1 domain; that stretch reads NIVLEKGHTG…VVSLSLKRRK (88 aa). The interval 324 to 351 is disordered; sequence IHSPSAPIHPPPPPPVHHGSLSQLSVGQ. Positions 330 to 339 are enriched in pro residues; sequence PIHPPPPPPV. 2 consecutive PDZ domains span residues 361–448 and 510–591; these read VIDL…QQGT and PVQL…QYRP. One can recognise an SH3 domain in the interval 619 to 690; it reads RKSEYVRALF…PSKKRVEKRE (72 aa). Residues 673–723 form a disordered region; that stretch reads EETAEGVIPSKKRVEKRERLRRKQVNFNSGSQSLGRNSSTTGLENRRGSRS. Basic residues predominate over residues 682-696; the sequence is SKKRVEKRERLRRKQ. The span at 697–715 shows a compositional bias: polar residues; the sequence is VNFNSGSQSLGRNSSTTGL. The region spanning 769-955 is the Guanylate kinase-like domain; sequence VRPVIILGAL…VLSKVYSIIS (187 aa).

This sequence belongs to the MAGUK family. Homooligomerizes; requires L27 domain. Interacts (via L27 domain) with ajm-1; the interaction regulates ajm-1 apical junction location. In terms of tissue distribution, expressed in the apical junctions in the hypodermis. Expressed in epithelial cells in the reproductive system including vulva, uterus and spermatheca.

It localises to the membrane. Its subcellular location is the apical cell membrane. The protein resides in the cell junction. It is found in the adherens junction. The protein localises to the lateral cell membrane. It localises to the cytoplasm. Functionally, essential multidomain scaffolding protein required for normal development. Recruits channels, receptors and signaling molecules to discrete plasma membrane domains in polarized cells. Required for proper embryonic elongation. Acts upstream of ajm-1 and becomes localized to apical junctions independently of ajm-1. With let-413, cooperatively regulates ajm-1 localization to apical junctions and the establishment of newly formed epithelia. Plays a role in assembling the adherens junction by clustering ajm-1 and other proteins, to form electron-dense structures; may form a compartment distinct to that of hmp-1 and associated proteins. Plays a role in the directed outgrowth of seam cells, towards neighboring seam cells, during larval development. This Caenorhabditis elegans protein is Disks large homolog 1.